A 417-amino-acid chain; its full sequence is Trafficking protein particle complex subunit 13 (417 aa).

The protein belongs to the TRAPPC13 family. Part of the multisubunit TRAPP (transport protein particle) complex.

The sequence is that of Trafficking protein particle complex subunit 13 (Trappc13) from Mus musculus (Mouse).